Reading from the N-terminus, the 130-residue chain is Small ribosomal subunit protein uS9 (130 aa).

The protein belongs to the universal ribosomal protein uS9 family.

This chain is Small ribosomal subunit protein uS9, found in Phytoplasma australiense.